A 155-amino-acid chain; its full sequence is Large-conductance mechanosensitive channel (155 aa).

Helical transmembrane passes span 16 to 36, 40 to 60, and 88 to 108; these read VVDM…VNNL, VILP…LYII, and GVFL…FLLV.

It belongs to the MscL family. In terms of assembly, homopentamer.

It localises to the cell inner membrane. In terms of biological role, channel that opens in response to stretch forces in the membrane lipid bilayer. May participate in the regulation of osmotic pressure changes within the cell. The sequence is that of Large-conductance mechanosensitive channel from Chlorobium chlorochromatii (strain CaD3).